Reading from the N-terminus, the 112-residue chain is Cytochrome c 2.1 (112 aa).

C20, C23, H24, and M85 together coordinate heme c.

Belongs to the cytochrome c family. Post-translationally, binds 1 heme c group covalently per subunit.

The protein localises to the mitochondrion intermembrane space. In terms of biological role, electron carrier protein. The oxidized form of the cytochrome c heme group can accept an electron from the heme group of the cytochrome c1 subunit of cytochrome reductase. Cytochrome c then transfers this electron to the cytochrome oxidase complex, the final protein carrier in the mitochondrial electron-transport chain. The sequence is that of Cytochrome c 2.1 from Caenorhabditis briggsae.